Reading from the N-terminus, the 707-residue chain is Choline transporter-like protein 4 (707 aa).

Residues 1-32 are Cytoplasmic-facing; that stretch reads MGEKQDPDKAYGKPAKYDPSFRGPIRNRSCTD. Residues 33-53 traverse the membrane as a helical segment; sequence IICCVLFFVFILGYIAVGLVA. At 54–226 the chain is on the extracellular side; it reads WVYGDPQQVL…KIFEDFAQSW (173 aa). 4 N-linked (GlcNAc...) asparagine glycosylation sites follow: N67, N142, N184, and N195. Residues 227–247 form a helical membrane-spanning segment; it reads YWILAALGVALVLSLLFVLLL. Topologically, residues 248 to 249 are cytoplasmic; that stretch reads RL. A helical membrane pass occupies residues 250-270; sequence VAGPLVFVLIIGVLGVLAYGI. Over 271–306 the chain is Extracellular; sequence YHCWNEYRLLRDKGASISQLGFTTNLSAYSSVQETW. A glycan (N-linked (GlcNAc...) asparagine) is linked at N295. The helical transmembrane segment at 307 to 327 threads the bilayer; the sequence is LAALILLAVLEGILLLMLIFL. Residues 328 to 355 are Cytoplasmic-facing; the sequence is RQRIRIAIALLEEASRAVGQMMSTLFYP. A helical transmembrane segment spans residues 356 to 376; that stretch reads LVTFVLLLVCIAYWAMTALYL. Residues 377–452 are Extracellular-facing; sequence ATSGQPQYVL…GVLGLFWTIN (76 aa). N390, N402, and N413 each carry an N-linked (GlcNAc...) asparagine glycan. Residues 453-473 form a helical membrane-spanning segment; sequence WVLALGQCVLAGAFASFYWAF. Residues 474 to 498 are Cytoplasmic-facing; it reads HKPRDIPTFPLSSAFIRTLRYHTGS. Residues 499-519 traverse the membrane as a helical segment; that stretch reads LAFGALILTLVQIARAILEYI. At 520–557 the chain is on the extracellular side; the sequence is DHKLRGAQNPVARCIMCCFKCCLWCLEKFIKFLNRNAY. The chain crosses the membrane as a helical span at residues 558–578; the sequence is IMIAIYGKNFCVSAKNAFMLL. Topologically, residues 579–594 are cytoplasmic; sequence MRNIVRVVVLDKVTDL. Residues 595 to 615 traverse the membrane as a helical segment; sequence LLFFGKLLVVGGVGVLSFFFF. Residues 616–635 are Extracellular-facing; it reads TGRIQGLGKDFESPQLNYYW. The helical transmembrane segment at 636 to 656 threads the bilayer; it reads LPIMTSIMGAYVIASGFFSVF. Residues 657–707 lie on the Cytoplasmic side of the membrane; that stretch reads GMCVDTLFLCFLEDLERNDGSLDRPYYMSKALLKILGKKNEVPSGDKKRKK.

The protein belongs to the CTL (choline transporter-like) family. In terms of processing, N-glycosylated; N-glycosylation of Asn-677 and Asn-390 is required for a proper thiamine pyrophosphate uptake.

Its subcellular location is the membrane. The protein resides in the apical cell membrane. The enzyme catalyses choline(out) + n H(+)(in) = choline(in) + n H(+)(out). It carries out the reaction thiamine diphosphate(out) = thiamine diphosphate(in). Its function is as follows. Choline transporter that plays a role in the choline-acetylcholine system and is required to the efferent innervation of hair cells in the olivocochlear bundle for the maintenance of physiological function of outer hair cells and the protection of hair cells from acoustic injury. Also described as a thiamine pyrophosphate transporter in colon, may mediate the absorption of microbiota-generated thiamine pyrophosphate and contribute to host thiamine (vitamin B1) homeostasis. This is Choline transporter-like protein 4 from Sus scrofa (Pig).